Reading from the N-terminus, the 427-residue chain is UDP-N-acetylglucosamine 1-carboxyvinyltransferase (427 aa).

22–23 serves as a coordination point for phosphoenolpyruvate; that stretch reads KN. Arg99 provides a ligand contact to UDP-N-acetyl-alpha-D-glucosamine. The active-site Proton donor is the Cys123. Cys123 is modified (2-(S-cysteinyl)pyruvic acid O-phosphothioketal). Residues 128-132, Asp313, and Ile335 contribute to the UDP-N-acetyl-alpha-D-glucosamine site; that span reads RPIDL.

This sequence belongs to the EPSP synthase family. MurA subfamily.

The protein localises to the cytoplasm. It catalyses the reaction phosphoenolpyruvate + UDP-N-acetyl-alpha-D-glucosamine = UDP-N-acetyl-3-O-(1-carboxyvinyl)-alpha-D-glucosamine + phosphate. The protein operates within cell wall biogenesis; peptidoglycan biosynthesis. Functionally, cell wall formation. Adds enolpyruvyl to UDP-N-acetylglucosamine. This Sphingopyxis alaskensis (strain DSM 13593 / LMG 18877 / RB2256) (Sphingomonas alaskensis) protein is UDP-N-acetylglucosamine 1-carboxyvinyltransferase.